Reading from the N-terminus, the 238-residue chain is Pyridoxine 5'-phosphate synthase (238 aa).

Asparagine 7 is a 3-amino-2-oxopropyl phosphate binding site. 9–10 (DH) contacts 1-deoxy-D-xylulose 5-phosphate. Arginine 18 lines the 3-amino-2-oxopropyl phosphate pocket. Histidine 43 serves as the catalytic Proton acceptor. 1-deoxy-D-xylulose 5-phosphate-binding residues include arginine 45 and histidine 50. The Proton acceptor role is filled by glutamate 70. Threonine 100 serves as a coordination point for 1-deoxy-D-xylulose 5-phosphate. The Proton donor role is filled by histidine 190. Residues glycine 191 and 212–213 (GH) contribute to the 3-amino-2-oxopropyl phosphate site.

It belongs to the PNP synthase family. Homooctamer; tetramer of dimers.

The protein localises to the cytoplasm. It catalyses the reaction 3-amino-2-oxopropyl phosphate + 1-deoxy-D-xylulose 5-phosphate = pyridoxine 5'-phosphate + phosphate + 2 H2O + H(+). It participates in cofactor biosynthesis; pyridoxine 5'-phosphate biosynthesis; pyridoxine 5'-phosphate from D-erythrose 4-phosphate: step 5/5. Functionally, catalyzes the complicated ring closure reaction between the two acyclic compounds 1-deoxy-D-xylulose-5-phosphate (DXP) and 3-amino-2-oxopropyl phosphate (1-amino-acetone-3-phosphate or AAP) to form pyridoxine 5'-phosphate (PNP) and inorganic phosphate. This chain is Pyridoxine 5'-phosphate synthase, found in Prochlorococcus marinus (strain MIT 9312).